The primary structure comprises 375 residues: Alcohol dehydrogenase 1 (375 aa).

Alanine 1 carries the post-translational modification N-acetylalanine. Zn(2+) contacts are provided by cysteine 46, histidine 68, cysteine 98, cysteine 101, cysteine 104, cysteine 112, and cysteine 175. NAD(+) is bound by residues 200 to 205 (GLGGVG), aspartate 224, lysine 229, 293 to 295 (VGL), and arginine 370.

It belongs to the zinc-containing alcohol dehydrogenase family. Class-I subfamily. Requires Zn(2+) as cofactor.

It localises to the cytoplasm. It catalyses the reaction a primary alcohol + NAD(+) = an aldehyde + NADH + H(+). The enzyme catalyses a secondary alcohol + NAD(+) = a ketone + NADH + H(+). The polypeptide is Alcohol dehydrogenase 1 (Pelophylax perezi (Perez's frog)).